Here is a 230-residue protein sequence, read N- to C-terminus: Large ribosomal subunit protein uL1 (230 aa).

This sequence belongs to the universal ribosomal protein uL1 family. Part of the 50S ribosomal subunit.

Binds directly to 23S rRNA. The L1 stalk is quite mobile in the ribosome, and is involved in E site tRNA release. Its function is as follows. Protein L1 is also a translational repressor protein, it controls the translation of the L11 operon by binding to its mRNA. The sequence is that of Large ribosomal subunit protein uL1 from Limosilactobacillus fermentum (strain NBRC 3956 / LMG 18251) (Lactobacillus fermentum).